The following is a 784-amino-acid chain: Toll-like receptor 2 (784 aa).

The signal sequence occupies residues 1–18 (MPHTLWMVWVLGVIISLS). At 19 to 587 (KEESSNQASL…VRLSVSECHR (569 aa)) the chain is on the extracellular side. Cys-30 and Cys-36 are disulfide-bonded. LRR repeat units lie at residues 54–77 (VKSL…RYVN), 78–101 (LQAL…SLGR), 102–125 (LEHL…PLSS), 126–150 (LKFL…HLTK), 151–175 (LRIL…GLTF), 176–199 (LEEL…SIQN), 200–223 (VSHL…LTSS), 224–250 (VECL…TNSL), 251–278 (IKKF…QISG), 279–308 (LLEL…DPGK), 309–337 (VETV…LTER), 338–361 (VKRI…HLKS), 362–388 (LEYL…AWPS), 389–414 (LQTL…TLKN), 415–437 (LTNL…WPEK), 438–457 (MKYL…CIPK), 458–478 (TLEI…NLPQ), 479–500 (LKEL…LLPM), and 501–524 (LLVL…SFHT). Asn-114 carries N-linked (GlcNAc...) asparagine glycosylation. An N-linked (GlcNAc...) asparagine glycan is attached at Asn-199. Residues Cys-353 and Cys-382 are joined by a disulfide bond. Asn-414 carries an N-linked (GlcNAc...) asparagine glycan. Cys-432 and Cys-454 are oxidised to a cystine. An N-linked (GlcNAc...) asparagine glycan is attached at Asn-442. The LRRCT domain maps to 525 to 579 (LKTLEAGGNNFICSCEFLSFTQEQQALAKVLVDWPANYLCDSPSHVRGQRVQDVR). A helical membrane pass occupies residues 588 to 608 (AALVSGMCCALFLLILLMGVL). The Cytoplasmic portion of the chain corresponds to 609 to 784 (CHRFHGLWYM…WVNLRAAIKS (176 aa)). The 144-residue stretch at 639–782 (ICYDAFVSYS…GFWVNLRAAI (144 aa)) folds into the TIR domain. Residue Lys-754 forms a Glycyl lysine isopeptide (Lys-Gly) (interchain with G-Cter in ubiquitin) linkage. Residues 761–778 (YLEWPMDEARQEGFWVNL) carry the ATG16L1-binding motif motif.

This sequence belongs to the Toll-like receptor family. As to quaternary structure, interacts with LY96, TLR1 and TLR6 (via extracellular domain). TLR2 seems to exist in heterodimers with either TLR1 or TLR6 before stimulation by the ligand. The heterodimers form bigger oligomers in response to their corresponding ligands as well as further heterotypic associations with other receptors such as CD14 and/or CD36. Binds MYD88 (via TIR domain). Interacts with TICAM1. Interacts with CNPY3. Interacts with ATG16L1. Interacts with PPP1R11. Interacts with TICAM2. Interacts with TIRAP. Post-translationally, ubiquitinated at Lys-754 by PPP1R11, leading to its degradation. Deubiquitinated by USP2. In terms of processing, glycosylation of Asn-442 is critical for secretion of the N-terminal ectodomain of TLR2.

Its subcellular location is the membrane. The protein resides in the cytoplasmic vesicle. The protein localises to the phagosome membrane. It is found in the membrane raft. Its function is as follows. Cooperates with LY96 to mediate the innate immune response to bacterial lipoproteins and other microbial cell wall components. Cooperates with TLR1 or TLR6 to mediate the innate immune response to bacterial lipoproteins or lipopeptides. Acts via MYD88 and TRAF6, leading to NF-kappa-B activation, cytokine secretion and the inflammatory response. May also promote apoptosis in response to lipoproteins. Forms activation clusters composed of several receptors depending on the ligand, these clusters trigger signaling from the cell surface and subsequently are targeted to the Golgi in a lipid-raft dependent pathway. Forms the cluster TLR2:TLR6:CD14:CD36 in response to diacylated lipopeptides and TLR2:TLR1:CD14 in response to triacylated lipopeptides. The protein is Toll-like receptor 2 (TLR2) of Macaca fascicularis (Crab-eating macaque).